Reading from the N-terminus, the 946-residue chain is Ent-kaur-16-ene synthase (946 aa).

Mg(2+) is bound by residues Asp656, Glu660, Asn839, Asp840, Ser843, and Asp847. The short motif at 656–660 is the DEXXE motif element; the sequence is DEFFE.

This sequence belongs to the terpene synthase family. Mg(2+) serves as cofactor.

It carries out the reaction ent-copalyl diphosphate = ent-kaur-16-ene + diphosphate. It catalyses the reaction (2E,6E,10E)-geranylgeranyl diphosphate = ent-copalyl diphosphate. Its pathway is plant hormone biosynthesis; gibberellin biosynthesis. Catalyzes the conversion of geranylgeranyl diphosphate to the gibberellin precursor ent-kaurene diphosphate in a two step process. The chain is Ent-kaur-16-ene synthase from Phaeosphaeria sp. (strain L487).